The sequence spans 337 residues: Deoxyhypusine hydroxylase (337 aa).

HEAT-like PBS-type repeat units lie at residues 73–99 (LKHE…VLSD) and 106–132 (CRHE…YRDR). Residues His-75, Glu-76, His-108, and Glu-109 each contribute to the Fe cation site. Basic and acidic residues predominate over residues 156 to 165 (AERQKEKLRP). The disordered stretch occupies residues 156-183 (AERQKEKLRPSDFASIDPAPPMPESDKE). HEAT-like PBS-type repeat units follow at residues 202–235 (SRYR…GLSD), 240–266 (FRHE…ALSN), and 273–300 (VRHE…FLHD). Residues His-242, Glu-243, His-275, and Glu-276 each contribute to the Fe cation site.

This sequence belongs to the deoxyhypusine hydroxylase family. Fe(2+) is required as a cofactor.

It is found in the cytoplasm. It localises to the nucleus. The enzyme catalyses [eIF5A protein]-deoxyhypusine + AH2 + O2 = [eIF5A protein]-hypusine + A + H2O. It participates in protein modification; eIF5A hypusination. Catalyzes the hydroxylation of the N(6)-(4-aminobutyl)-L-lysine intermediate to form hypusine, an essential post-translational modification only found in mature eIF-5A factor. The polypeptide is Deoxyhypusine hydroxylase (Gibberella zeae (strain ATCC MYA-4620 / CBS 123657 / FGSC 9075 / NRRL 31084 / PH-1) (Wheat head blight fungus)).